Consider the following 725-residue polypeptide: Ribosomal RNA large subunit methyltransferase K/L (725 aa).

Residues Val-46 to Leu-157 form the THUMP domain.

It belongs to the methyltransferase superfamily. RlmKL family.

The protein resides in the cytoplasm. The enzyme catalyses guanosine(2445) in 23S rRNA + S-adenosyl-L-methionine = N(2)-methylguanosine(2445) in 23S rRNA + S-adenosyl-L-homocysteine + H(+). It catalyses the reaction guanosine(2069) in 23S rRNA + S-adenosyl-L-methionine = N(2)-methylguanosine(2069) in 23S rRNA + S-adenosyl-L-homocysteine + H(+). Specifically methylates the guanine in position 2445 (m2G2445) and the guanine in position 2069 (m7G2069) of 23S rRNA. This is Ribosomal RNA large subunit methyltransferase K/L from Ectopseudomonas mendocina (strain ymp) (Pseudomonas mendocina).